A 196-amino-acid chain; its full sequence is Probable thymidylate kinase (196 aa).

7–14 (GIDGAGKT) lines the ATP pocket.

It belongs to the thymidylate kinase family.

The catalysed reaction is dTMP + ATP = dTDP + ADP. The polypeptide is Probable thymidylate kinase (tmk) (Archaeoglobus fulgidus (strain ATCC 49558 / DSM 4304 / JCM 9628 / NBRC 100126 / VC-16)).